The sequence spans 220 residues: Large ribosomal subunit protein uL16 (220 aa).

Belongs to the universal ribosomal protein uL16 family. In terms of assembly, component of the small ribosomal subunit. Mature ribosomes consist of a small (40S) and a large (60S) subunit. The 40S subunit contains about 33 different proteins and 1 molecule of RNA (18S). The 60S subunit contains about 49 different proteins and 3 molecules of RNA (25S, 5.8S and 5S).

The sequence is that of Large ribosomal subunit protein uL16 (RPL10) from Zea mays (Maize).